Reading from the N-terminus, the 271-residue chain is Multivesicular body subunit 12A (271 aa).

One can recognise an MABP domain in the interval 7–149 (SAPLAGLVWS…GFAIWCKKSK (143 aa)). Thr128 carries the phosphothreonine modification. The tract at residues 149 to 192 (KAPRPVPKPRTLSQDMRGLSLDPPKEPSKGSHPERTLSRLGSRA) is disordered. Residues 153-158 (PVPKPR) carry the SH3-binding motif. Residues Ser161 and Ser168 each carry the phosphoserine modification. Positions 171–185 (PPKEPSKGSHPERTL) are enriched in basic and acidic residues. An interaction with TSG101, VPS37B and VPS28 region spans residues 190–271 (SRASTLRRTD…AAARLPPSVS (82 aa)). 2 positions are modified to phosphoserine: Ser193 and Ser200. Tyr202 carries the post-translational modification Phosphotyrosine. Residue Ser205 is modified to Phosphoserine. In terms of domain architecture, UMA spans 213-263 (MDGVPFTLHPRFEGKSCGPLNLSAFGDLTIKSLADIEKEYNYGFVVEKTAA).

This sequence belongs to the MVB12 family. In terms of assembly, component of the ESCRT-I complex (endosomal sorting complex required for transport I) which consists of TSG101, VPS28, a VPS37 protein (VPS37A to -D) and MVB12A or MVB12B in a 1:1:1:1 stoichiometry. Interacts with CD2AP and CIN85/SH3KBP1. Interacts with CD2AP (via one of the SH3 domains). Interacts with TSG101; the association appears to be mediated by the TSG101-VPS37 binary subcomplex. Interacts with VPS28. Interacts with VPS37B; the association appears to be mediated by the TSG101-VPS37 binary subcomplex. Interacts with VPS37C; the association appears to be mediated by the TSG101-VPS37 binary subcomplex. Interacts with VPS37D; the association appears to be mediated by the TSG101-VPS37 binary subcomplex. Interacts with CEP55. Post-translationally, phosphorylated on Tyr-202 upon EGF stimulation. Phosphorylation is required for interaction with CD2AP and CIN85/SH3KBP1.

It localises to the cytoplasm. It is found in the cytoskeleton. Its subcellular location is the nucleus. The protein localises to the endosome. The protein resides in the microtubule organizing center. It localises to the centrosome. It is found in the late endosome membrane. Its function is as follows. Component of the ESCRT-I complex, a regulator of vesicular trafficking process. Required for the sorting of endocytic ubiquitinated cargos into multivesicular bodies. May be involved in the ligand-mediated internalization and down-regulation of EGF receptor. The polypeptide is Multivesicular body subunit 12A (Mvb12a) (Mus musculus (Mouse)).